Here is a 773-residue protein sequence, read N- to C-terminus: DNA gyrase subunit B (773 aa).

In terms of domain architecture, Toprim spans 416–530 (SEIFLVEGDS…QGHVFIAQAP (115 aa)). 3 residues coordinate Mg(2+): glutamate 422, aspartate 495, and aspartate 497.

Belongs to the type II topoisomerase GyrB family. As to quaternary structure, heterotetramer, composed of two GyrA and two GyrB chains. In the heterotetramer, GyrA contains the active site tyrosine that forms a transient covalent intermediate with DNA, while GyrB binds cofactors and catalyzes ATP hydrolysis. The cofactor is Mg(2+). Mn(2+) serves as cofactor. Ca(2+) is required as a cofactor.

Its subcellular location is the cytoplasm. The catalysed reaction is ATP-dependent breakage, passage and rejoining of double-stranded DNA.. Its function is as follows. A type II topoisomerase that negatively supercoils closed circular double-stranded (ds) DNA in an ATP-dependent manner to modulate DNA topology and maintain chromosomes in an underwound state. Negative supercoiling favors strand separation, and DNA replication, transcription, recombination and repair, all of which involve strand separation. Also able to catalyze the interconversion of other topological isomers of dsDNA rings, including catenanes and knotted rings. Type II topoisomerases break and join 2 DNA strands simultaneously in an ATP-dependent manner. In Helicobacter pylori (strain J99 / ATCC 700824) (Campylobacter pylori J99), this protein is DNA gyrase subunit B.